A 325-amino-acid polypeptide reads, in one-letter code: tRNA U34 carboxymethyltransferase (325 aa).

Carboxy-S-adenosyl-L-methionine contacts are provided by residues K91, W105, K110, G130, 152–154 (DPS), M196, Y200, and R315.

Belongs to the class I-like SAM-binding methyltransferase superfamily. CmoB family. As to quaternary structure, homotetramer.

It carries out the reaction carboxy-S-adenosyl-L-methionine + 5-hydroxyuridine(34) in tRNA = 5-carboxymethoxyuridine(34) in tRNA + S-adenosyl-L-homocysteine + H(+). In terms of biological role, catalyzes carboxymethyl transfer from carboxy-S-adenosyl-L-methionine (Cx-SAM) to 5-hydroxyuridine (ho5U) to form 5-carboxymethoxyuridine (cmo5U) at position 34 in tRNAs. This Aeromonas hydrophila subsp. hydrophila (strain ATCC 7966 / DSM 30187 / BCRC 13018 / CCUG 14551 / JCM 1027 / KCTC 2358 / NCIMB 9240 / NCTC 8049) protein is tRNA U34 carboxymethyltransferase.